A 212-amino-acid chain; its full sequence is Ropporin-1A (212 aa).

The 38-residue stretch at 12-49 (PELPKMLKEFAKAAIRVQPQDLIQWAADYFEALSRGET) folds into the RIIa domain. S56 carries the phosphoserine modification. The interval 209-212 (VQLE) is interaction with RHPN1.

Belongs to the ropporin family. As to quaternary structure, homodimer. Interacts with AKAP3 and RHPN1. May interact with SPA17. Interacts with FSCB; the interaction increases upon spermatozoa capacitation conditions. Interacts with CFAP61. Post-translationally, sumoylated, sumoylation decreases upon spermatozoa capacitation conditions. In terms of tissue distribution, testis specific in adult. Overexpressed in hematologic tumor cells.

The protein localises to the cell projection. It localises to the cilium. It is found in the flagellum. In terms of biological role, important for male fertility. With ROPN1L, involved in fibrous sheath integrity and sperm motility, plays a role in PKA-dependent signaling processes required for spermatozoa capacitation. The protein is Ropporin-1A (ROPN1) of Homo sapiens (Human).